The chain runs to 450 residues: Hydrolase ffsE (450 aa).

The Nucleophile role is filled by serine 266.

The protein belongs to the AB hydrolase superfamily. FUS2 hydrolase family. In terms of assembly, homodimer.

The protein operates within mycotoxin biosynthesis. Functionally, hydrolase; part of the gene cluster that mediates the biosynthesis of the cytotoxic leucine-containing cytochalasans, including aspochalasin C, aspochalasin E, TMC-169, flavichalasine F, aspergillin PZ, aspochalasin M and flavichalasine G. The first step in the pathway is catalyzed by the hybrid PKS-NRPS ffsA that utilizes 8 units of malonyl-CoA to iteratively assemble the octaketide chain before addition of L-leucine by the C-terminal NRPS modules. Because ffsA lacks a designated enoylreductase (ER) domain, the required activity is provided the enoyl reductase fssC. The methyltransferase (MT) domain of ffsA catalyzes the alpha-methylation at C10 and C14 using S-adenosyl-L-methionine as the methyl-donating cosubstrate. Reduction by the hydrolyase ffsE, followed by dehydration and intra-molecular Diels-Alder cyclization by the Diels-Alderase ffsF then yield the required isoindolone-fused macrocycle. A number of oxidative steps catalyzed by the tailoring cytochrome P450 monooxygenase ffsD, the FAD-linked oxidoreductase ffsJ and the short-chain dehydrogenase/reductase ffsI, are further required to afford the final products. This is Hydrolase ffsE from Aspergillus flavipes.